The chain runs to 418 residues: Serine hydroxymethyltransferase (418 aa).

(6S)-5,6,7,8-tetrahydrofolate is bound by residues Leu-121 and Gly-125 to Leu-127. An N6-(pyridoxal phosphate)lysine modification is found at Lys-230. Ser-355–Phe-357 lines the (6S)-5,6,7,8-tetrahydrofolate pocket.

It belongs to the SHMT family. Homodimer. The cofactor is pyridoxal 5'-phosphate.

The protein resides in the cytoplasm. It carries out the reaction (6R)-5,10-methylene-5,6,7,8-tetrahydrofolate + glycine + H2O = (6S)-5,6,7,8-tetrahydrofolate + L-serine. It functions in the pathway one-carbon metabolism; tetrahydrofolate interconversion. The protein operates within amino-acid biosynthesis; glycine biosynthesis; glycine from L-serine: step 1/1. In terms of biological role, catalyzes the reversible interconversion of serine and glycine with tetrahydrofolate (THF) serving as the one-carbon carrier. This reaction serves as the major source of one-carbon groups required for the biosynthesis of purines, thymidylate, methionine, and other important biomolecules. Also exhibits THF-independent aldolase activity toward beta-hydroxyamino acids, producing glycine and aldehydes, via a retro-aldol mechanism. This chain is Serine hydroxymethyltransferase, found in Streptococcus pyogenes serotype M3 (strain ATCC BAA-595 / MGAS315).